We begin with the raw amino-acid sequence, 496 residues long: Glycerol kinase (496 aa).

Threonine 14 is an ADP binding site. ATP contacts are provided by threonine 14 and threonine 15. Threonine 14 provides a ligand contact to sn-glycerol 3-phosphate. Sn-glycerol 3-phosphate contacts are provided by arginine 84, glutamate 85, tyrosine 136, and aspartate 246. Arginine 84, glutamate 85, tyrosine 136, aspartate 246, and glutamine 247 together coordinate glycerol. 2 residues coordinate ADP: threonine 268 and glycine 313. Residues threonine 268, glycine 313, glutamine 317, and glycine 414 each contribute to the ATP site. Glycine 414 and asparagine 418 together coordinate ADP.

Belongs to the FGGY kinase family.

The enzyme catalyses glycerol + ATP = sn-glycerol 3-phosphate + ADP + H(+). It participates in polyol metabolism; glycerol degradation via glycerol kinase pathway; sn-glycerol 3-phosphate from glycerol: step 1/1. Inhibited by fructose 1,6-bisphosphate (FBP). In terms of biological role, key enzyme in the regulation of glycerol uptake and metabolism. Catalyzes the phosphorylation of glycerol to yield sn-glycerol 3-phosphate. This Myxococcus xanthus (strain DK1622) protein is Glycerol kinase.